Reading from the N-terminus, the 342-residue chain is Trans-3-hydroxy-L-proline dehydratase (342 aa).

The active-site Proton acceptor is the Ser90. Residues 91-92 (GS), Asp252, and 257-258 (GT) contribute to the substrate site.

This sequence belongs to the proline racemase family.

It carries out the reaction trans-3-hydroxy-L-proline = 1-pyrroline-2-carboxylate + H2O. Catalyzes the dehydration of trans-3-hydroxy-L-proline (t3LHyp) to Delta(1)-pyrroline-2-carboxylate (Pyr2C). Is likely involved in a degradation pathway that converts t3LHyp to L-proline. Displays neither proline racemase activity nor 4-hydroxyproline 2-epimerase activity. This chain is Trans-3-hydroxy-L-proline dehydratase, found in Allorhizobium ampelinum (strain ATCC BAA-846 / DSM 112012 / S4) (Agrobacterium vitis (strain S4)).